The sequence spans 882 residues: Leucine--tRNA ligase (882 aa).

The 'HIGH' region signature appears at 43 to 53; sequence PYPSGRIHMGH. The short motif at 634 to 638 is the 'KMSKS' region element; it reads KMSKS. ATP is bound at residue Lys-637.

The protein belongs to the class-I aminoacyl-tRNA synthetase family.

Its subcellular location is the cytoplasm. It carries out the reaction tRNA(Leu) + L-leucine + ATP = L-leucyl-tRNA(Leu) + AMP + diphosphate. The sequence is that of Leucine--tRNA ligase from Rhodopseudomonas palustris (strain BisB18).